Consider the following 371-residue polypeptide: Aminomethyltransferase (371 aa).

It belongs to the GcvT family. In terms of assembly, the glycine cleavage system is composed of four proteins: P, T, L and H.

It catalyses the reaction N(6)-[(R)-S(8)-aminomethyldihydrolipoyl]-L-lysyl-[protein] + (6S)-5,6,7,8-tetrahydrofolate = N(6)-[(R)-dihydrolipoyl]-L-lysyl-[protein] + (6R)-5,10-methylene-5,6,7,8-tetrahydrofolate + NH4(+). In terms of biological role, the glycine cleavage system catalyzes the degradation of glycine. The protein is Aminomethyltransferase of Nitrosococcus oceani (strain ATCC 19707 / BCRC 17464 / JCM 30415 / NCIMB 11848 / C-107).